The following is a 180-amino-acid chain: Large ribosomal subunit protein uL5c (180 aa).

It belongs to the universal ribosomal protein uL5 family. Part of the 50S ribosomal subunit; contacts the 5S rRNA.

The protein localises to the plastid. It is found in the chloroplast. In terms of biological role, binds 5S rRNA, forms part of the central protuberance of the 50S subunit. This is Large ribosomal subunit protein uL5c (rpl5) from Tetradesmus obliquus (Green alga).